Reading from the N-terminus, the 795-residue chain is MKFSELWLREWVNPAISSETLSDQITMIGLEVDGVEAVAGQFHGVVVGEVVQCAQHPNADKLRVTKVNVGGERLLDIVCGAPNCRLGLKVAVATVGAVLPGDFKIKAAKLRGEPSEGMLCSFSELGISEDHDGIIELPIDAPLGVDLREYLKLDDKVIEISITPNRADCLSIIGVARDVAVANKMPLSEPQIEAVKPTTDAIFPIRVEATEACPRYLGRVIKNINVKAATPQWMREKLRRGGIRSIDPIVDVTNYVLLELGQPLHAFDLERLNGSITVRMAKQDEKLVLLDGTEANLSTDTLVISDEKQAVAMAGIFGGEHSGVNEETQNILLECAFFAPLAIAGRARRYGLHTDASHRYERGVDPQLQHKAIERTTQLLIDICGGEAGPIIDVTDESQLPQSATITLRREKLDRLIGHYIPDEQVGDILTHLGCKVTIQENCWQAVAPSWRFDVEIEEDLVEEVARIYGYNNIPDVPIRADLIMKKHRETDLSLQRVKTVLVDRGYQEAITYSFVDPKIQALLHPQQQALMLPNPISADMSAMRLSLLTGLLTTVVYNQNRQQNRVRLFETGLRFVPDENADQGIRQELMLGGVITGNRFEEHWSLEKQSVDFFDMKGDLEAVLELTGKLSKISFRADVNPALHPGQSAGIYLENEYIGYIGVVHPELERKLDLNGRTVVFEVLWNKLASRVVPDAKEISRFPSNRRDIAIVVPENVAVEDVLAECKKVGVNHIVGINLFDVYCGKGVAEGHKSLAISFILQDTARTLEEEEIAATINKCVAVLKQRFQASLRD.

The region spanning 39 to 148 (AGQFHGVVVG…IDAPLGVDLR (110 aa)) is the tRNA-binding domain. The region spanning 401–476 (PQSATITLRR…RIYGYNNIPD (76 aa)) is the B5 domain. Residues Asp454, Asp460, Glu463, and Glu464 each contribute to the Mg(2+) site. One can recognise an FDX-ACB domain in the interval 701–794 (SRFPSNRRDI…LKQRFQASLR (94 aa)).

This sequence belongs to the phenylalanyl-tRNA synthetase beta subunit family. Type 1 subfamily. As to quaternary structure, tetramer of two alpha and two beta subunits. It depends on Mg(2+) as a cofactor.

It localises to the cytoplasm. It carries out the reaction tRNA(Phe) + L-phenylalanine + ATP = L-phenylalanyl-tRNA(Phe) + AMP + diphosphate + H(+). The sequence is that of Phenylalanine--tRNA ligase beta subunit from Photorhabdus laumondii subsp. laumondii (strain DSM 15139 / CIP 105565 / TT01) (Photorhabdus luminescens subsp. laumondii).